A 142-amino-acid polypeptide reads, in one-letter code: Peptide methionine sulfoxide reductase MsrB (142 aa).

The MsrB domain occupies 2–125; that stretch reads IKKDKNELNE…NSAAIQFIPY (124 aa). Cys114 acts as the Nucleophile in catalysis.

This sequence belongs to the MsrB Met sulfoxide reductase family.

The catalysed reaction is L-methionyl-[protein] + [thioredoxin]-disulfide + H2O = L-methionyl-(R)-S-oxide-[protein] + [thioredoxin]-dithiol. In Staphylococcus haemolyticus (strain JCSC1435), this protein is Peptide methionine sulfoxide reductase MsrB.